Here is a 185-residue protein sequence, read N- to C-terminus: Lipid A acyltransferase PagP (185 aa).

An N-terminal signal peptide occupies residues 1 to 14; sequence MKLKPVLYLLMLLG. Cys15 carries N-palmitoyl cysteine lipidation. Cys15 carries S-diacylglycerol cysteine lipidation. Catalysis depends on residues His57, Asp100, and Ser101.

It belongs to the lipid A palmitoyltransferase family. Homodimer.

Its subcellular location is the cell outer membrane. It carries out the reaction a lipid A + a 1,2-diacyl-sn-glycero-3-phosphocholine = a hepta-acyl lipid A + a 2-acyl-sn-glycero-3-phosphocholine. It catalyses the reaction a lipid IVA + a 1,2-diacyl-sn-glycero-3-phosphocholine = a lipid IVB + a 2-acyl-sn-glycero-3-phosphocholine. The enzyme catalyses a lipid IIA + a 1,2-diacyl-sn-glycero-3-phosphocholine = a lipid IIB + a 2-acyl-sn-glycero-3-phosphocholine. In terms of biological role, transfers a fatty acid residue from the sn-1 position of a phospholipid to the N-linked hydroxyfatty acid chain on the proximal unit of lipid A or its precursors. This Erwinia pyrifoliae (strain DSM 12163 / CIP 106111 / Ep16/96) protein is Lipid A acyltransferase PagP.